The sequence spans 82 residues: MVFLLCFFLVADVSYGINGDCELPKVVGPCRARFPRYYYNSSSKRCEKFIYGGCGGNANNFHTLEECEKVCGVRSRDSPKEN.

Residues 1–16 (MVFLLCFFLVADVSYG) form the signal peptide. A BPTI/Kunitz inhibitor domain is found at 21-71 (CELPKVVGPCRARFPRYYYNSSSKRCEKFIYGGCGGNANNFHTLEECEKVC). Intrachain disulfides connect C21–C71, C30–C54, and C46–C67. A propeptide spanning residues 76-82 (RDSPKEN) is cleaved from the precursor.

It belongs to the venom Kunitz-type family. Sea anemone type 2 potassium channel toxin subfamily.

Its subcellular location is the secreted. The protein resides in the nematocyst. In terms of biological role, serine protease inhibitor that inhibits both tissue and plasma kallikreins. Has hemolytic activity. Inhibits voltage-gated potassium channels (Kv). This Anemonia viridis (Snakelocks anemone) protein is KappaPI-actitoxin-Avd3e.